We begin with the raw amino-acid sequence, 350 residues long: Phenylalanine--tRNA ligase alpha subunit (350 aa).

E271 is a binding site for Mg(2+).

The protein belongs to the class-II aminoacyl-tRNA synthetase family. Phe-tRNA synthetase alpha subunit type 1 subfamily. Tetramer of two alpha and two beta subunits. Mg(2+) serves as cofactor.

It localises to the cytoplasm. The enzyme catalyses tRNA(Phe) + L-phenylalanine + ATP = L-phenylalanyl-tRNA(Phe) + AMP + diphosphate + H(+). The sequence is that of Phenylalanine--tRNA ligase alpha subunit from Acidovorax ebreus (strain TPSY) (Diaphorobacter sp. (strain TPSY)).